Consider the following 239-residue polypeptide: MGPVRLGTLLFILTVYGAWAGTPKEEEDDTERLPSKCEVCKLLSLELQEELSRTGRSREVLELGQVLDTGKRKRHIPYSVSETRLEEALENLCERILDYSVHAERKGSLRYAKGQSQTMATLKGLVQKGVKVDLGIPLELWDEPSVEVTFLKKQCETMLEQFEDVVGDWYFHHQEQPLQHFLCEGHVLPASETACLQETWTGKEKITDGQEKTEEEEQDQEEEEMTNTPVHSQHDPEDL.

Positions 1 to 20 are cleaved as a signal peptide; that stretch reads MGPVRLGTLLFILTVYGAWA. Disulfide bonds link cysteine 37/cysteine 195, cysteine 40/cysteine 183, and cysteine 93/cysteine 155. A disordered region spans residues 199–239; that stretch reads TWTGKEKITDGQEKTEEEEQDQEEEEMTNTPVHSQHDPEDL. Residues 201–212 show a composition bias toward basic and acidic residues; that stretch reads TGKEKITDGQEK. A compositionally biased stretch (acidic residues) spans 213-225; it reads TEEEEQDQEEEEM.

It belongs to the canopy family. As to quaternary structure, interacts with TLR4.

It is found in the secreted. Plays a role in the regulation of the cell surface expression of TLR4. The protein is Protein canopy homolog 4 (CNPY4) of Bos taurus (Bovine).